Here is a 626-residue protein sequence, read N- to C-terminus: PEX5-related protein (626 aa).

Disordered stretches follow at residues 1–20 (MYQG…LSSD), 118–167 (VSQT…SSLD), and 181–235 (KFHG…ASEL). A compositionally biased stretch (basic and acidic residues) spans 181-198 (KFHGDRNTKGHPMAERKS). Phosphoserine is present on Ser205. A compositionally biased stretch (low complexity) spans 225–235 (SALNSESASEL). Ser253, Ser257, and Ser261 each carry phosphoserine. 3 TPR repeats span residues 326–359 (WPGA…DPGD), 360–393 (AEAW…QPNN), and 395–427 (KALM…NPKY). 2 positions are modified to phosphoserine: Ser445 and Ser447. TPR repeat units follow at residues 474–507 (PDLQ…RPED), 509–541 (SLWN…QPGF), and 543–575 (RSRY…QRKS).

The protein belongs to the peroxisomal targeting signal receptor family. Interacts with RAB8B. Forms an obligate 4:4 complex with HCN2. May interact with the C-terminal PTS1-type tripeptide peroxisomal targeting signal (SKL-type); the relevance of such interaction is however unclear. Interacts with HCN3. Interacts with HCN4 with a 4:4 HCN4:PEX5L stoichiometry; reduces the effects of cAMP on the voltage-dependence and rate of activation of HCN4. As to expression, mainly expressed in brain. Also expressed in pancreas, testis and pituitary.

The protein localises to the cytoplasm. The protein resides in the membrane. Accessory subunit of hyperpolarization-activated cyclic nucleotide-gated (HCN) channels, regulating their cell-surface expression and cyclic nucleotide dependence. The protein is PEX5-related protein (PEX5L) of Homo sapiens (Human).